Here is a 69-residue protein sequence, read N- to C-terminus: uncharacterized protein (69 aa).

The segment at 48–69 (EADDVKPRKGRKPKAVSDADKD) is disordered.

This is an uncharacterized protein from Salmonella phage P22 (Bacteriophage P22).